A 101-amino-acid polypeptide reads, in one-letter code: Large ribosomal subunit protein bL28 (101 aa).

The protein belongs to the bacterial ribosomal protein bL28 family.

The protein is Large ribosomal subunit protein bL28 of Rhodopseudomonas palustris (strain ATCC BAA-98 / CGA009).